We begin with the raw amino-acid sequence, 1132 residues long: DNA-directed RNA polymerase subunit beta (1132 aa).

This sequence belongs to the RNA polymerase beta chain family. In terms of assembly, the RNAP catalytic core consists of 2 alpha, 1 beta, 1 beta' and 1 omega subunit. When a sigma factor is associated with the core the holoenzyme is formed, which can initiate transcription.

It catalyses the reaction RNA(n) + a ribonucleoside 5'-triphosphate = RNA(n+1) + diphosphate. DNA-dependent RNA polymerase catalyzes the transcription of DNA into RNA using the four ribonucleoside triphosphates as substrates. The polypeptide is DNA-directed RNA polymerase subunit beta (Carboxydothermus hydrogenoformans (strain ATCC BAA-161 / DSM 6008 / Z-2901)).